The primary structure comprises 312 residues: tRNA pseudouridine synthase B (312 aa).

Asp-38 functions as the Nucleophile in the catalytic mechanism.

It belongs to the pseudouridine synthase TruB family. Type 1 subfamily.

It carries out the reaction uridine(55) in tRNA = pseudouridine(55) in tRNA. Responsible for synthesis of pseudouridine from uracil-55 in the psi GC loop of transfer RNAs. The chain is tRNA pseudouridine synthase B from Syntrophus aciditrophicus (strain SB).